The primary structure comprises 77 residues: Acyl carrier protein (77 aa).

Residues 2-77 (SDIADRVKKI…DAVKFIQGAV (76 aa)) enclose the Carrier domain. An O-(pantetheine 4'-phosphoryl)serine modification is found at serine 37.

The protein belongs to the acyl carrier protein (ACP) family. Post-translationally, 4'-phosphopantetheine is transferred from CoA to a specific serine of apo-ACP by AcpS. This modification is essential for activity because fatty acids are bound in thioester linkage to the sulfhydryl of the prosthetic group.

It localises to the cytoplasm. The protein operates within lipid metabolism; fatty acid biosynthesis. In terms of biological role, carrier of the growing fatty acid chain in fatty acid biosynthesis. The chain is Acyl carrier protein from Paracoccus denitrificans (strain Pd 1222).